Here is a 79-residue protein sequence, read N- to C-terminus: Small ribosomal subunit protein bS16 (79 aa).

Belongs to the bacterial ribosomal protein bS16 family.

The protein is Small ribosomal subunit protein bS16 of Buchnera aphidicola subsp. Acyrthosiphon pisum (strain 5A).